A 187-amino-acid polypeptide reads, in one-letter code: Probable chorismate pyruvate-lyase (187 aa).

Substrate-binding residues include Arg-80, Leu-118, and Glu-170.

The protein belongs to the UbiC family.

It is found in the cytoplasm. It catalyses the reaction chorismate = 4-hydroxybenzoate + pyruvate. It functions in the pathway cofactor biosynthesis; ubiquinone biosynthesis. Its function is as follows. Removes the pyruvyl group from chorismate, with concomitant aromatization of the ring, to provide 4-hydroxybenzoate (4HB) for the ubiquinone pathway. This Pseudomonas fluorescens (strain ATCC BAA-477 / NRRL B-23932 / Pf-5) protein is Probable chorismate pyruvate-lyase.